Consider the following 192-residue polypeptide: Protein CREG1 (192 aa).

A signal peptide spans methionine 1–glycine 18. 3 N-linked (GlcNAc...) asparagine glycosylation sites follow: asparagine 95, asparagine 133, and asparagine 166.

This sequence belongs to the CREG family.

It localises to the secreted. Its function is as follows. May contribute to the transcriptional control of cell growth and differentiation. This Gallus gallus (Chicken) protein is Protein CREG1 (CREG1).